The primary structure comprises 1652 residues: Maestro heat-like repeat-containing protein family member 1 (1652 aa).

7 HEAT repeats span residues 3–41, 260–300, 344–382, 385–423, 1369–1407, 1410–1448, and 1616–1652; these read ETYA…SKPA, EEQL…VGSR, CCSP…AAAA, EVKK…HGYL, LMLL…GSPD, QTHS…LMDL, and QVDL…VKFA.

The protein belongs to the MROH1 family. As to quaternary structure, homooligomer; homooligomerizes at lysosome scission sites.

The protein resides in the lysosome membrane. Its function is as follows. Lysosome fission factor. Recruited to lysosomes by RAB7 (RAB7A or RAB7B) at scission sites and homooligomerizes to mediate the constriction and scission of lysosomal tubules. May sever membranes by inserting amphipathic helices into one bilayer leaflet. Lysosome fission is required to maintain their steady-state number, shape, size, composition and function, and to accomplish regeneration. In Bos taurus (Bovine), this protein is Maestro heat-like repeat-containing protein family member 1 (MROH1).